Reading from the N-terminus, the 320-residue chain is Minor outer capsid protein P9 (320 aa).

Positions 297–320 (RNDDEEELAGSEFTSLLSDDGRMG) are disordered.

It belongs to the phytoreovirus minor outer capsid protein P9 family.

The protein resides in the virion. Its subcellular location is the host cytoplasm. Its function is as follows. Minor outer capsid protein. The chain is Minor outer capsid protein P9 from Rice gall dwarf virus (RGDV).